The following is a 326-amino-acid chain: Eukaryotic translation initiation factor 3 subunit I (326 aa).

WD repeat units lie at residues 8 to 47, 50 to 89, 145 to 184, 188 to 227, and 285 to 326; these read GHER…RLGT, GHQG…IIAS, MTES…KVVD, DHAA…CLKT, and GHFG…NIFE.

Belongs to the eIF-3 subunit I family. In terms of assembly, component of the eukaryotic translation initiation factor 3 (eIF-3) complex. The eIF-3 complex interacts with pix.

The protein localises to the cytoplasm. Component of the eukaryotic translation initiation factor 3 (eIF-3) complex, which is involved in protein synthesis of a specialized repertoire of mRNAs and, together with other initiation factors, stimulates binding of mRNA and methionyl-tRNAi to the 40S ribosome. The eIF-3 complex specifically targets and initiates translation of a subset of mRNAs involved in cell proliferation. This chain is Eukaryotic translation initiation factor 3 subunit I, found in Drosophila pseudoobscura pseudoobscura (Fruit fly).